Reading from the N-terminus, the 437-residue chain is Adenylosuccinate synthetase (437 aa).

GTP contacts are provided by residues 12–18 and 40–42; these read GDEGKGK and GHT. Aspartate 13 (proton acceptor) is an active-site residue. Residues aspartate 13 and glycine 40 each coordinate Mg(2+). Residues 13 to 16, 38 to 41, threonine 128, arginine 142, glutamine 223, threonine 238, and arginine 302 each bind IMP; these read DEGK and NAGH. The active-site Proton donor is the histidine 41. Substrate is bound at residue 298-304; sequence TTTGRKR. Residues arginine 304, 330–332, and 412–414 each bind GTP; these read KLD and SLG.

This sequence belongs to the adenylosuccinate synthetase family. Homodimer. It depends on Mg(2+) as a cofactor.

Its subcellular location is the cytoplasm. It catalyses the reaction IMP + L-aspartate + GTP = N(6)-(1,2-dicarboxyethyl)-AMP + GDP + phosphate + 2 H(+). Its pathway is purine metabolism; AMP biosynthesis via de novo pathway; AMP from IMP: step 1/2. Functionally, plays an important role in the de novo pathway of purine nucleotide biosynthesis. Catalyzes the first committed step in the biosynthesis of AMP from IMP. This is Adenylosuccinate synthetase from Trichodesmium erythraeum (strain IMS101).